Consider the following 281-residue polypeptide: Elongation factor Ts (281 aa).

Residues 80-83 (TDFV) form an involved in Mg(2+) ion dislocation from EF-Tu region.

This sequence belongs to the EF-Ts family.

It is found in the cytoplasm. Its function is as follows. Associates with the EF-Tu.GDP complex and induces the exchange of GDP to GTP. It remains bound to the aminoacyl-tRNA.EF-Tu.GTP complex up to the GTP hydrolysis stage on the ribosome. In Vibrio atlanticus (strain LGP32) (Vibrio splendidus (strain Mel32)), this protein is Elongation factor Ts.